Here is a 352-residue protein sequence, read N- to C-terminus: MGIDKRKNDHIYLASSDLSQVGTALFEEVVLIHNALPEIDFSDIDLSTNFLGAPVKAPFGIGAMTGGTELAGKINAELAKAAEEFGIPMYVGSQRIALVKPEVRWTFEVVKQNAPSIPKIANLGAPQLAQLSEKQLVDWVVQAVDMIDAYAVAVHLNAAQEVVQPEGEPSFRGVLEKLKIVKRAAGRPLIVKEVGNGISKEVAAKLAEVADAIDVGGLGGTSFVAIEGARAADAWLQRRVAETFKYWGIPTAASICEVKSVYRGFVIASGGIRSGLDGARALALGAHFFTMSQPLLKATLEGRLREEIEAVITEVKIAMFLTGVRRPQELAQVPRVYGPRLRAWLEQRGTTC.

6 to 7 contributes to the substrate binding site; sequence RK. FMN contacts are provided by residues 63-65, serine 93, and asparagine 122; that span reads AMT. 93 to 95 serves as a coordination point for substrate; it reads SQR. Residue glutamine 160 coordinates substrate. Glutamate 161 provides a ligand contact to Mg(2+). Residues lysine 192, threonine 221, 271–273, and 292–293 contribute to the FMN site; these read GIR and SQ.

It belongs to the IPP isomerase type 2 family. In terms of assembly, homooctamer. Dimer of tetramers. The cofactor is FMN. NADPH serves as cofactor. It depends on Mg(2+) as a cofactor.

The protein resides in the cytoplasm. It carries out the reaction isopentenyl diphosphate = dimethylallyl diphosphate. Functionally, involved in the biosynthesis of isoprenoids. Catalyzes the 1,3-allylic rearrangement of the homoallylic substrate isopentenyl (IPP) to its allylic isomer, dimethylallyl diphosphate (DMAPP). This Pyrobaculum arsenaticum (strain DSM 13514 / JCM 11321 / PZ6) protein is Isopentenyl-diphosphate delta-isomerase.